The chain runs to 436 residues: Gamma-glutamyl phosphate reductase (436 aa).

This sequence belongs to the gamma-glutamyl phosphate reductase family.

The protein resides in the cytoplasm. It carries out the reaction L-glutamate 5-semialdehyde + phosphate + NADP(+) = L-glutamyl 5-phosphate + NADPH + H(+). Its pathway is amino-acid biosynthesis; L-proline biosynthesis; L-glutamate 5-semialdehyde from L-glutamate: step 2/2. Catalyzes the NADPH-dependent reduction of L-glutamate 5-phosphate into L-glutamate 5-semialdehyde and phosphate. The product spontaneously undergoes cyclization to form 1-pyrroline-5-carboxylate. This chain is Gamma-glutamyl phosphate reductase, found in Prochlorococcus marinus (strain AS9601).